Consider the following 201-residue polypeptide: Mediator of RNA polymerase II transcription subunit 22 (201 aa).

A coiled-coil region spans residues 93-123; the sequence is SVNESINQRNQQLRTLREECDKKLIALRDDI. The disordered stretch occupies residues 182–201; the sequence is SQIHTPPHLNGHGAGMTEHT.

It belongs to the Mediator complex subunit 22 family. As to quaternary structure, component of the Mediator complex.

Its subcellular location is the nucleus. Functionally, component of the Mediator complex, a coactivator involved in the regulated transcription of nearly all RNA polymerase II-dependent genes. Mediator functions as a bridge to convey information from gene-specific regulatory proteins to the basal RNA polymerase II transcription machinery. Mediator is recruited to promoters by direct interactions with regulatory proteins and serves as a scaffold for the assembly of a functional preinitiation complex with RNA polymerase II and the general transcription factors. This is Mediator of RNA polymerase II transcription subunit 22 (med22) from Xenopus laevis (African clawed frog).